A 95-amino-acid chain; its full sequence is Small ribosomal subunit protein bS6 (95 aa).

It belongs to the bacterial ribosomal protein bS6 family.

Its function is as follows. Binds together with bS18 to 16S ribosomal RNA. The protein is Small ribosomal subunit protein bS6 of Corynebacterium glutamicum (strain ATCC 13032 / DSM 20300 / JCM 1318 / BCRC 11384 / CCUG 27702 / LMG 3730 / NBRC 12168 / NCIMB 10025 / NRRL B-2784 / 534).